The primary structure comprises 179 residues: Large ribosomal subunit protein uL6 (179 aa).

This sequence belongs to the universal ribosomal protein uL6 family. In terms of assembly, part of the 50S ribosomal subunit.

In terms of biological role, this protein binds to the 23S rRNA, and is important in its secondary structure. It is located near the subunit interface in the base of the L7/L12 stalk, and near the tRNA binding site of the peptidyltransferase center. The sequence is that of Large ribosomal subunit protein uL6 from Prochlorococcus marinus (strain MIT 9313).